Consider the following 360-residue polypeptide: LETM1 domain-containing protein 1 (360 aa).

Residues 1-110 are required and sufficient for mitochondrial import; that stretch reads MALSRVCWAR…KKARRIKTNM (110 aa). Residues 1–137 are Cytoplasmic-facing; it reads MALSRVCWAR…LRQFRRDVTK (137 aa). Residues 138–158 traverse the membrane as a helical segment; that stretch reads CLFLGILSIPPFANYLVFLLM. Topologically, residues 159–360 are mitochondrial intermembrane; that stretch reads YLFPRQLLIR…LSINYVGSRR (202 aa). Residues 186–360 enclose the Letm1 RBD domain; it reads LRKQSHPEIL…LSINYVGSRR (175 aa).

In terms of assembly, interacts with BRI3BP. Interacts (via C-terminal) with SMARCA4; the interaction regulates transcriptional expression of thermogenic genes in brown adipose tissue.

It localises to the mitochondrion outer membrane. The protein resides in the nucleus. The protein localises to the mitochondrion inner membrane. Functionally, plays an essential role for mitochondrial structure and function, as well as thermogenesis of brown adipocytes. In brown adipose tissue also localizes in the nucleus where it interacts with the chromatin remodeler SMARCA4 to regulate thermogenic genes expression, such as UCP1. May regulate phagocytosis and inflammatory responses to lipopolysaccharide in macrophages. Involved in tumorigenesis and may function as a negative regulator of the p53/TP53. The polypeptide is LETM1 domain-containing protein 1 (Bos taurus (Bovine)).